Consider the following 421-residue polypeptide: uncharacterized protein (421 aa).

This is an uncharacterized protein from Escherichia coli (strain K12).